Here is a 505-residue protein sequence, read N- to C-terminus: Catalase (505 aa).

Catalysis depends on residues His56 and Asn129. Residue Tyr339 participates in heme binding.

This sequence belongs to the catalase family. Requires heme as cofactor.

Its subcellular location is the cytoplasm. The enzyme catalyses 2 H2O2 = O2 + 2 H2O. Functionally, decomposes hydrogen peroxide into water and oxygen; serves to protect cells from the toxic effects of hydrogen peroxide. This is Catalase (katA) from Helicobacter pylori (strain ATCC 700392 / 26695) (Campylobacter pylori).